Consider the following 992-residue polypeptide: Disks large-associated protein 4 (992 aa).

The segment covering 1 to 20 (MKGLGDSRPRHLSDSLDPPH) has biased composition (basic and acidic residues). Disordered stretches follow at residues 1-31 (MKGLGDSRPRHLSDSLDPPHEPLFAGPDRNP) and 154-226 (APSM…ASGL). The segment covering 162 to 171 (GKVGGNGGKK) has biased composition (gly residues). Over residues 172 to 194 (GVLEDGKGRRAKSKERAKAGEPK) the composition is skewed to basic and acidic residues. The span at 199–208 (SNISGWWSSD) shows a compositional bias: polar residues. A phosphoserine mark is found at Ser-206 and Ser-207. Omega-N-methylarginine is present on Arg-290. 5 disordered regions span residues 342-435 (TTLL…SWEE), 527-665 (SVSL…RKLS), 677-751 (VPKE…GPRQ), 763-798 (SYGDNSDPALEASSLPPPDPWMETSSSSPAEPAQPG), and 915-992 (TPEK…QTRL). A phosphoserine mark is found at Ser-377, Ser-380, Ser-384, Ser-388, Ser-405, Ser-415, and Ser-421. Residues 399–413 (LRATQQSLGEQSNPR) are compositionally biased toward polar residues. Low complexity predominate over residues 528 to 554 (VSLQSLSPPPSTGSLSNSRTLPSSSCL). Polar residues predominate over residues 576-591 (VTVQSSTESAQDTYLD). Phosphoserine is present on residues Ser-580, Ser-581, Ser-609, Ser-611, Ser-665, and Ser-744. The span at 600–620 (TSQSGLSNSSDSLDSSTRPPS) shows a compositional bias: low complexity. The residue at position 915 (Thr-915) is a Phosphothreonine. 2 stretches are compositionally biased toward basic and acidic residues: residues 915–925 (TPEKRKEEKKP) and 940–958 (VSRDKASDAGDKQRQEARK). Polar residues predominate over residues 969–978 (VRQNSATESA). At Ser-973 the chain carries Phosphoserine.

The protein belongs to the SAPAP family. In terms of assembly, interacts with DLG1 and DLG4/PSD-95. In terms of tissue distribution, expressed in brain.

It localises to the membrane. Its function is as follows. May play a role in the molecular organization of synapses and neuronal cell signaling. Could be an adapter protein linking ion channel to the subsynaptic cytoskeleton. May induce enrichment of PSD-95/SAP90 at the plasma membrane. The sequence is that of Disks large-associated protein 4 (Dlgap4) from Rattus norvegicus (Rat).